Here is an 899-residue protein sequence, read N- to C-terminus: Translation initiation factor IF-2 (899 aa).

Disordered stretches follow at residues 116–135 (AKARAEQQAREAAEQKARLQ), 170–189 (RGGGTVKPAPKPAETLEQKK), and 262–306 (DREI…ANKH). One can recognise a tr-type G domain in the interval 399 to 568 (TRPPVVTIMG…LIQSELMELK (170 aa)). Residues 408–415 (GHVDHGKT) form a G1 region. 408 to 415 (GHVDHGKT) contacts GTP. The tract at residues 433-437 (GITQH) is G2. Positions 454–457 (DTPG) are G3. GTP-binding positions include 454 to 458 (DTPGH) and 508 to 511 (NKMD). The G4 stretch occupies residues 508-511 (NKMD). The segment at 544–546 (SAH) is G5.

The protein belongs to the TRAFAC class translation factor GTPase superfamily. Classic translation factor GTPase family. IF-2 subfamily.

The protein resides in the cytoplasm. Functionally, one of the essential components for the initiation of protein synthesis. Protects formylmethionyl-tRNA from spontaneous hydrolysis and promotes its binding to the 30S ribosomal subunits. Also involved in the hydrolysis of GTP during the formation of the 70S ribosomal complex. This is Translation initiation factor IF-2 from Acinetobacter baumannii (strain AB307-0294).